A 194-amino-acid chain; its full sequence is Thymidine kinase (194 aa).

ATP-binding positions include 9-16 and 85-88; these read GAMNSGKT and DECQ. Glu-86 (proton acceptor) is an active-site residue. Cys-143, Cys-146, Cys-180, and His-183 together coordinate Zn(2+).

Belongs to the thymidine kinase family. In terms of assembly, homotetramer.

Its subcellular location is the cytoplasm. It carries out the reaction thymidine + ATP = dTMP + ADP + H(+). This Enterococcus faecalis (strain ATCC 700802 / V583) protein is Thymidine kinase.